The sequence spans 310 residues: D-alanine--D-alanine ligase (310 aa).

The ATP-grasp domain maps to 105–301 (KQAFVSAGIL…FEELVERIIL (197 aa)). Residue 133 to 186 (SFGLPLVVKPVQEGSSVGISIVKEESQLAAAVKLAFRHDDEILVEQFIKGQEVQ) participates in ATP binding. Residues aspartate 254, glutamate 267, and asparagine 269 each contribute to the Mg(2+) site.

The protein belongs to the D-alanine--D-alanine ligase family. Requires Mg(2+) as cofactor. Mn(2+) is required as a cofactor.

Its subcellular location is the cytoplasm. The catalysed reaction is 2 D-alanine + ATP = D-alanyl-D-alanine + ADP + phosphate + H(+). The protein operates within cell wall biogenesis; peptidoglycan biosynthesis. Functionally, cell wall formation. This Pelobacter propionicus (strain DSM 2379 / NBRC 103807 / OttBd1) protein is D-alanine--D-alanine ligase.